Here is a 313-residue protein sequence, read N- to C-terminus: Ribosomal RNA small subunit methyltransferase H (313 aa).

S-adenosyl-L-methionine-binding positions include 35 to 37 (GGH), Asp-55, Phe-79, Asp-101, and Gln-108.

Belongs to the methyltransferase superfamily. RsmH family.

The protein localises to the cytoplasm. The enzyme catalyses cytidine(1402) in 16S rRNA + S-adenosyl-L-methionine = N(4)-methylcytidine(1402) in 16S rRNA + S-adenosyl-L-homocysteine + H(+). In terms of biological role, specifically methylates the N4 position of cytidine in position 1402 (C1402) of 16S rRNA. The sequence is that of Ribosomal RNA small subunit methyltransferase H from Shigella flexneri.